The following is an 89-amino-acid chain: Dynein light chain LC6, flagellar outer arm (89 aa).

Belongs to the dynein light chain family. In terms of assembly, consists of at least 3 heavy chains (alpha, beta and gamma), 2 intermediate chains and 8 light chains.

The protein resides in the cytoplasm. The protein localises to the cytoskeleton. It localises to the flagellum axoneme. The sequence is that of Dynein light chain LC6, flagellar outer arm from Heliocidaris crassispina (Sea urchin).